The following is a 399-amino-acid chain: Tryptophan synthase beta chain (399 aa).

The residue at position 92 (lysine 92) is an N6-(pyridoxal phosphate)lysine.

The protein belongs to the TrpB family. Tetramer of two alpha and two beta chains. Requires pyridoxal 5'-phosphate as cofactor.

The catalysed reaction is (1S,2R)-1-C-(indol-3-yl)glycerol 3-phosphate + L-serine = D-glyceraldehyde 3-phosphate + L-tryptophan + H2O. The protein operates within amino-acid biosynthesis; L-tryptophan biosynthesis; L-tryptophan from chorismate: step 5/5. Its function is as follows. The beta subunit is responsible for the synthesis of L-tryptophan from indole and L-serine. This chain is Tryptophan synthase beta chain, found in Legionella pneumophila subsp. pneumophila (strain Philadelphia 1 / ATCC 33152 / DSM 7513).